The sequence spans 168 residues: Skp-like protein (168 aa).

An N-terminal signal peptide occupies residues 1–22 (MRKFTQFVLITAAIMAAPSAFA).

This sequence belongs to the Skp family.

In Pseudomonas aeruginosa (strain ATCC 15692 / DSM 22644 / CIP 104116 / JCM 14847 / LMG 12228 / 1C / PRS 101 / PAO1), this protein is Skp-like protein.